Reading from the N-terminus, the 158-residue chain is SsrA-binding protein (158 aa).

It belongs to the SmpB family.

It localises to the cytoplasm. Functionally, required for rescue of stalled ribosomes mediated by trans-translation. Binds to transfer-messenger RNA (tmRNA), required for stable association of tmRNA with ribosomes. tmRNA and SmpB together mimic tRNA shape, replacing the anticodon stem-loop with SmpB. tmRNA is encoded by the ssrA gene; the 2 termini fold to resemble tRNA(Ala) and it encodes a 'tag peptide', a short internal open reading frame. During trans-translation Ala-aminoacylated tmRNA acts like a tRNA, entering the A-site of stalled ribosomes, displacing the stalled mRNA. The ribosome then switches to translate the ORF on the tmRNA; the nascent peptide is terminated with the 'tag peptide' encoded by the tmRNA and targeted for degradation. The ribosome is freed to recommence translation, which seems to be the essential function of trans-translation. In Psychrobacter sp. (strain PRwf-1), this protein is SsrA-binding protein.